The following is a 102-amino-acid chain: NADH-quinone oxidoreductase subunit K (102 aa).

Transmembrane regions (helical) follow at residues 6-26 (LEHGLIVATILFALGFYGVMV), 30-50 (LLFMLMSLEIMMNAAALAFVL), and 62-82 (IMFILILTLAAAEACIGLAIV).

Belongs to the complex I subunit 4L family. NDH-1 is composed of 14 different subunits. Subunits NuoA, H, J, K, L, M, N constitute the membrane sector of the complex.

It is found in the cell inner membrane. It carries out the reaction a quinone + NADH + 5 H(+)(in) = a quinol + NAD(+) + 4 H(+)(out). In terms of biological role, NDH-1 shuttles electrons from NADH, via FMN and iron-sulfur (Fe-S) centers, to quinones in the respiratory chain. The immediate electron acceptor for the enzyme in this species is believed to be ubiquinone. Couples the redox reaction to proton translocation (for every two electrons transferred, four hydrogen ions are translocated across the cytoplasmic membrane), and thus conserves the redox energy in a proton gradient. The sequence is that of NADH-quinone oxidoreductase subunit K from Acinetobacter baylyi (strain ATCC 33305 / BD413 / ADP1).